Reading from the N-terminus, the 800-residue chain is Endonuclease MutS2 (800 aa).

336 to 343 (GPNTGGKT) is an ATP binding site. The Smr domain maps to 725 to 800 (LDLRGVRYEA…GDGATIVELK (76 aa)).

Belongs to the DNA mismatch repair MutS family. MutS2 subfamily. Homodimer. Binds to stalled ribosomes, contacting rRNA.

Endonuclease that is involved in the suppression of homologous recombination and thus may have a key role in the control of bacterial genetic diversity. Its function is as follows. Acts as a ribosome collision sensor, splitting the ribosome into its 2 subunits. Detects stalled/collided 70S ribosomes which it binds and splits by an ATP-hydrolysis driven conformational change. Acts upstream of the ribosome quality control system (RQC), a ribosome-associated complex that mediates the extraction of incompletely synthesized nascent chains from stalled ribosomes and their subsequent degradation. Probably generates substrates for RQC. The polypeptide is Endonuclease MutS2 (Leuconostoc mesenteroides subsp. mesenteroides (strain ATCC 8293 / DSM 20343 / BCRC 11652 / CCM 1803 / JCM 6124 / NCDO 523 / NBRC 100496 / NCIMB 8023 / NCTC 12954 / NRRL B-1118 / 37Y)).